Consider the following 282-residue polypeptide: Putative hydrolase BceJ2315_61450 (282 aa).

Residues glutamate 124, glutamate 126, and aspartate 155 each contribute to the Mg(2+) site.

It belongs to the FAH family. Mg(2+) is required as a cofactor.

This chain is Putative hydrolase BceJ2315_61450, found in Burkholderia cenocepacia (strain ATCC BAA-245 / DSM 16553 / LMG 16656 / NCTC 13227 / J2315 / CF5610) (Burkholderia cepacia (strain J2315)).